The primary structure comprises 803 residues: Bromodomain-containing protein 2 (803 aa).

Met-1 is modified (N-acetylmethionine). Residues 1–28 (MLQNVTPHSKLPGEGNAGLLGLGPEAAA) are disordered. Thr-6 is modified (phosphothreonine). Ser-37 bears the Phosphoserine mark. Residues 53 to 73 (ALQLTPANPPPPEVSNPKKPG) are disordered. One can recognise a Bromo 1 domain in the interval 74-180 (RVTNQLQYLH…KIFLQKVASM (107 aa)). 6 residues coordinate a protein: Asp-112, Tyr-155, Asn-156, Lys-157, Asp-160, and Asp-161. Disordered stretches follow at residues 268–349 (PPAQ…LSEQ), 456–653 (EPLE…RQLS), and 739–803 (EKRL…SDSG). The segment covering 285-298 (TTTPTPTAILAPGS) has biased composition (low complexity). A phosphoserine mark is found at Ser-298, Ser-301, and Ser-305. The span at 316–332 (MRRESGRPIKPPRKDLP) shows a compositional bias: basic and acidic residues. A Bromo 2 domain is found at 344-453 (GKLSEQLKHC…DVFEFRYAKM (110 aa)). Acidic residues predominate over residues 481–515 (SSEESSSESSSEEDEEEDEEEEEEEEESESSDSEE). Over residues 545-567 (KPKRKREKKEKKKKRKAEKHRGR) the composition is skewed to basic residues. A Nuclear localization signal motif is present at residues 556 to 560 (KKKRK). Positions 634 to 716 (DSEEEEESRP…SCLRKKPRKP (83 aa)) constitute an NET domain. The residue at position 635 (Ser-635) is a Phosphoserine. A compositionally biased stretch (basic and acidic residues) spans 641–652 (SRPMSYDEKRQL). Residues 777–797 (SASSSSSDSSSSSSSSSSSDT) show a composition bias toward low complexity.

This sequence belongs to the BET family. As to quaternary structure, homodimer. Interacts with E2F1. Interacts with (acetylated) STAT3; promoting STAT3 recruitment to chromatin. Interacts with CTCF; promoting BRD2 recruitment to chromatin.

It is found in the nucleus. Its subcellular location is the chromosome. Chromatin reader protein that specifically recognizes and binds histone H4 acetylated at 'Lys-5' and 'Lys-12' (H4K5ac and H4K12ac, respectively), thereby controlling gene expression and remodeling chromatin structures. Recruits transcription factors and coactivators to target gene sites, and activates RNA polymerase II machinery for transcriptional elongation. Plays a key role in genome compartmentalization via its association with CTCF and cohesin: recruited to chromatin by CTCF and promotes formation of topologically associating domains (TADs) via its ability to bind acetylated histones, contributing to CTCF boundary formation and enhancer insulation. Also recognizes and binds acetylated non-histone proteins, such as STAT3. Involved in inflammatory response by regulating differentiation of naive CD4(+) T-cells into T-helper Th17: recognizes and binds STAT3 acetylated at 'Lys-87', promoting STAT3 recruitment to chromatin. In addition to acetylated lysines, also recognizes and binds lysine residues on histones that are both methylated and acetylated on the same side chain to form N6-acetyl-N6-methyllysine (Kacme), an epigenetic mark of active chromatin associated with increased transcriptional initiation. Specifically binds histone H4 acetyl-methylated at 'Lys-5' and 'Lys-12' (H4K5acme and H4K12acme, respectively). This chain is Bromodomain-containing protein 2 (BRD2), found in Canis lupus familiaris (Dog).